Consider the following 499-residue polypeptide: Apolipoprotein N-acyltransferase (499 aa).

A run of 6 helical transmembrane segments spans residues V17–L37, L38–L58, A84–L104, I131–G151, L163–L183, and R198–L218. Residues W232–F458 form the CN hydrolase domain. The active-site Proton acceptor is the E273. K322 is an active-site residue. The Nucleophile role is filled by C370. Residues I474–I494 traverse the membrane as a helical segment.

This sequence belongs to the CN hydrolase family. Apolipoprotein N-acyltransferase subfamily.

The protein localises to the cell inner membrane. It catalyses the reaction N-terminal S-1,2-diacyl-sn-glyceryl-L-cysteinyl-[lipoprotein] + a glycerophospholipid = N-acyl-S-1,2-diacyl-sn-glyceryl-L-cysteinyl-[lipoprotein] + a 2-acyl-sn-glycero-3-phospholipid + H(+). The protein operates within protein modification; lipoprotein biosynthesis (N-acyl transfer). Its function is as follows. Catalyzes the phospholipid dependent N-acylation of the N-terminal cysteine of apolipoprotein, the last step in lipoprotein maturation. The polypeptide is Apolipoprotein N-acyltransferase (Prochlorococcus marinus (strain MIT 9313)).